The primary structure comprises 356 residues: Protein RecA (356 aa).

Residue 78–85 (GPESSGKT) coordinates ATP.

It belongs to the RecA family.

The protein localises to the cytoplasm. In terms of biological role, can catalyze the hydrolysis of ATP in the presence of single-stranded DNA, the ATP-dependent uptake of single-stranded DNA by duplex DNA, and the ATP-dependent hybridization of homologous single-stranded DNAs. It interacts with LexA causing its activation and leading to its autocatalytic cleavage. This chain is Protein RecA, found in Paracoccus denitrificans.